A 73-amino-acid polypeptide reads, in one-letter code: Antimicrobial peptide lumbricin-PG (73 aa).

The signal sequence occupies residues 1 to 14; it reads MLLTISDFLFLSLT. A disordered region spans residues 25 to 48; that stretch reads RPWSDRKNNYSGPQFTYPPEKAPP.

It is found in the secreted. Its function is as follows. Displays antimicrobial activity against the Gram-positive bacterium S.aureus ATCC 2592, the Gram-negative bacteria E.coli ATCC 25922 and P.aeruginosa ATCC 27853, and the fungus C.albicans ATCC 2002. Displays stronger activity against P.aeruginosa and S.aureus than E.coli. Displays very weak hemolytic activity. This Metaphire guillelmi (Earthworm) protein is Antimicrobial peptide lumbricin-PG.